Here is a 508-residue protein sequence, read N- to C-terminus: MSWLIQNRIGNTLLRLNPSSSSIAIFSTFIKNLSTASEQLPETLDEYSQSEEIWNVIVGRDGDRDSEDDVFKRLSSDEICKRVNLSDGLVHKLLHRFRDDWRSALGILKWAESCKGHKHSSDAYDMAVDILGKAKKWDRMKEFVERMRGDKLVTLNTVAKIMRRFAGAGEWEEAVGIFDRLGEFGLEKNTESMNLLLDTLCKEKRVEQARVVLLQLKSHITPNAHTFNIFIHGWCKANRVEEALWTIQEMKGHGFRPCVISYTTIIRCYCQQFEFIKVYEMLSEMEANGSPPNSITYTTIMSSLNAQKEFEEALRVATRMKRSGCKPDSLFYNCLIHTLARAGRLEEAERVFRVEMPELGVSINTSTYNSMIAMYCHHDEEDKAIELLKEMESSNLCNPDVHTYQPLLRSCFKRGDVVEVGKLLKEMVTKHHLSLDESTYTFLIQRLCRANMCEWAYCLFEEMISQDITPRHRTCLLLLEEVKKKNMHESAERIEHIMKTVKLTAPVK.

The N-terminal 74 residues, 1–74, are a transit peptide targeting the mitochondrion; sequence MSWLIQNRIG…DSEDDVFKRL (74 aa). 10 PPR repeats span residues 120–150, 154–188, 189–219, 223–257, 258–292, 293–327, 328–363, 364–398, 400–434, and 436–470; these read SSDAYDMAVDILGKAKKWDRMKEFVERMRGD, TLNTVAKIMRRFAGAGEWEEAVGIFDRLGEFGLEK, NTESMNLLLDTLCKEKRVEQARVVLLQLKSH, NAHTFNIFIHGWCKANRVEEALWTIQEMKGHGFRP, CVISYTTIIRCYCQQFEFIKVYEMLSEMEANGSPP, NSITYTTIMSSLNAQKEFEEALRVATRMKRSGCKP, DSLFYNCLIHTLARAGRLEEAERVFRVEMPELGVSI, NTSTYNSMIAMYCHHDEEDKAIELLKEMESSNLCN, DVHTYQPLLRSCFKRGDVVEVGKLLKEMVTKHHLS, and DESTYTFLIQRLCRANMCEWAYCLFEEMISQDITP.

This sequence belongs to the PPR family. P subfamily.

It is found in the mitochondrion. This chain is Pentatricopeptide repeat-containing protein At3g04130, mitochondrial, found in Arabidopsis thaliana (Mouse-ear cress).